The sequence spans 145 residues: 3-dehydroquinate dehydratase (145 aa).

Tyrosine 22 (proton acceptor) is an active-site residue. Substrate is bound by residues asparagine 71, histidine 77, and aspartate 84. Histidine 97 acts as the Proton donor in catalysis. Substrate contacts are provided by residues leucine 98–serine 99 and arginine 108.

This sequence belongs to the type-II 3-dehydroquinase family. As to quaternary structure, homododecamer.

It carries out the reaction 3-dehydroquinate = 3-dehydroshikimate + H2O. The protein operates within metabolic intermediate biosynthesis; chorismate biosynthesis; chorismate from D-erythrose 4-phosphate and phosphoenolpyruvate: step 3/7. Functionally, catalyzes a trans-dehydration via an enolate intermediate. This chain is 3-dehydroquinate dehydratase, found in Francisella tularensis subsp. tularensis (strain WY96-3418).